We begin with the raw amino-acid sequence, 369 residues long: RAB6-interacting golgin (369 aa).

The tract at residues M1–K128 is disordered. Basic and acidic residues predominate over residues E11–R27. Composition is skewed to polar residues over residues E46–L61 and S82–S93. A compositionally biased stretch (basic and acidic residues) spans Q106 to N120. The stretch at R145–E297 forms a coiled coil. Residues I188–T369 form a necessary for interaction with RCHY1 region. The disordered stretch occupies residues V334 to T369. Polar residues predominate over residues C342–N361.

Belongs to the GORAB family. In terms of assembly, interacts with SCYL1. Interacts with RCHY1 and RAB6A/RAB6.

It is found in the cytoplasm. It localises to the golgi apparatus. The sequence is that of RAB6-interacting golgin (GORAB) from Homo sapiens (Human).